Reading from the N-terminus, the 655-residue chain is A-type voltage-gated potassium channel KCND3 (655 aa).

The Cytoplasmic segment spans residues 1–182 (MAAGVAAWLP…FENPHTSTLA (182 aa)). Residues 6–21 (AAWLPFARAAAIGWMP) are interaction with KCNIP1 and KCNIP2. Residues 70–78 (EKEFFFNED) form an interaction with KCNIP1 region. Positions 104, 110, 131, and 132 each coordinate Zn(2+). Residue serine 153 is modified to Phosphoserine. A helical transmembrane segment spans residues 183–204 (LVFYYVTGFFIAVSVITNVVET). The Extracellular portion of the chain corresponds to 205-223 (VPCGTVPGSKELPCGERYS). A helical membrane pass occupies residues 224-246 (VAFFCLDTACVMIFTVEYLLRLF). Residues 247 to 253 (AAPSRYR) lie on the Cytoplasmic side of the membrane. A helical transmembrane segment spans residues 254-277 (FIRSVMSIIDVVAIMPYYIGLVMT). The Extracellular portion of the chain corresponds to 278 to 283 (NNEDVS). Residues 284 to 306 (GAFVTLRVFRVFRIFKFSRHSQG) form a helical; Voltage-sensor membrane-spanning segment. Over 307–318 (LRILGYTLKSCA) the chain is Cytoplasmic. A helical transmembrane segment spans residues 319 to 343 (SELGFLLFSLTMAIIIFATVMFYAE). Topologically, residues 344-352 (KGSSASKFT) are extracellular. Positions 353–366 (SIPASFWYTIVTMT) form an intramembrane region, helical. Residues threonine 367, leucine 368, glycine 369, and tyrosine 370 each contribute to the K(+) site. Positions 367 to 372 (TLGYGD) match the Selectivity filter motif. An intramembrane segment occupies 367-374 (TLGYGDMV). The chain crosses the membrane as a helical span at residues 378-400 (IAGKIFGSICSLSGVLVIALPVP). The Cytoplasmic segment spans residues 401–655 (VIVSNFSRIY…TSNVVKVSAL (255 aa)). Threonine 459 bears the Phosphothreonine mark. The segment at 470–487 (SLIESQHHHLLHCLEKTT) is interaction with KCNIP1 and KCNIP2. The tract at residues 472-487 (IESQHHHLLHCLEKTT) is mediates dendritic targeting. The interval 523-565 (SSMQNYPSTRSPSLSSHSGLTTTCCSRRSKKTTHLPNSNLPAT) is disordered. A compositionally biased stretch (low complexity) spans 529-548 (PSTRSPSLSSHSGLTTTCCS). Phosphoserine is present on residues serine 569 and serine 585. Positions 615–655 (ISIPTPPALTPEGESRPPPASPGPNTNIPSITSNVVKVSAL) are disordered. Over residues 637 to 655 (GPNTNIPSITSNVVKVSAL) the composition is skewed to polar residues.

Belongs to the potassium channel family. D (Shal) (TC 1.A.1.2) subfamily. Kv4.3/KCND3 sub-subfamily. As to quaternary structure, homotetramer. Heterotetramer with KCND2. Associates with the regulatory subunit KCNIP3. Associates with the regulatory subunit KCNIP4. Interacts with KCNE1, KCNE2, SCN1B and KCNAB1 and DLG1. Component of heteromultimeric potassium channels. Identified in potassium channel complexes containing KCND1, KCND2, KCND3, KCNIP1, KCNIP2, KCNIP3, KCNIP4, DPP6 and DPP10. Interacts with KCNIP1; each KCNIP1 monomer interacts with two adjacent KCND3 subunits, through both the N-terminal inactivation ball of a KCND3 subunit and a C-terminal helix from the adjacent KCND3 subunit, clamping them together; this interaction stabilizes the tetrameric form and modulates the channel gating kinetics namely channel activation and inactivation kinetics and rate of recovery from inactivation. Interacts with DPP6; this interaction modulates the channel gating kinetics namely channel activation and inactivation kinetics and rate of recovery from inactivation. Interacts with KCNIP2; each KCNIP2 monomer interacts with two adjacent KCND3 subunits, through both the N-terminal inactivation ball of a KCND3 subunit and a C-terminal helix from the adjacent KCND3 subunit, clamping them together; this interaction modulates the channel gating kinetics. Post-translationally, regulated through phosphorylation at Ser-569 by CaMK2D.

It is found in the cell membrane. The protein resides in the sarcolemma. The protein localises to the cell projection. It localises to the dendrite. It carries out the reaction K(+)(in) = K(+)(out). Functionally, pore-forming (alpha) subunit of voltage-gated A-type potassium channels that mediates transmembrane potassium transport in excitable membranes, in brain and heart. In cardiomyocytes, may generate the transient outward potassium current I(To). In neurons, may conduct the transient subthreshold somatodendritic A-type potassium current (ISA). Kinetics properties are characterized by fast activation at subthreshold membrane potentials, rapid inactivation, and quick recovery from inactivation. Channel properties are modulated by interactions with regulatory subunits. Interaction with the regulatory subunits KCNIP1 or KCNIP2 modulates the channel gating kinetics namely channel activation and inactivation kinetics and rate of recovery from inactivation. Likewise, interaction with DPP6 modulates the channel gating kinetics namely channel activation and inactivation kinetics. The protein is A-type voltage-gated potassium channel KCND3 of Mus musculus (Mouse).